The following is a 672-amino-acid chain: uncharacterized protein (672 aa).

A compositionally biased stretch (basic and acidic residues) spans 1-10 (MAKSDGDDPL). The segment at 1-41 (MAKSDGDDPLRPASPRLRSSRRHSLRYSAYTGGPDPLAPPV) is disordered.

This is an uncharacterized protein from Mycobacterium bovis (strain ATCC BAA-935 / AF2122/97).